Reading from the N-terminus, the 587-residue chain is Estrogen receptor (587 aa).

The segment at 1-176 (MTLHTKTSGV…SMESTKETRY (176 aa)) is modulating (transactivation AF-1). 2 NR C4-type zinc fingers span residues 177–197 (CAVC…CEGC) and 213–237 (CPAT…LRKC). Residues 177-242 (CAVCNDYASG…RLRKCYEVGM (66 aa)) constitute a DNA-binding region (nuclear receptor). A hinge region spans residues 243–302 (MKGGIRKDRRGGRVMKQKRQREEQDSRNGEASSTELRAPTLWASPLVVKHNKKNSPALSL). The disordered stretch occupies residues 248–277 (RKDRRGGRVMKQKRQREEQDSRNGEASSTE). Residues 249–261 (KDRRGGRVMKQKR) are compositionally biased toward basic residues. Residues 303-539 (TAEQMVSALL…DLLLEMLDAH (237 aa)) enclose the NR LBD domain. Residues 303 to 587 (TAEQMVSALL…KEEENMQNTL (285 aa)) are transactivation AF-2.

The protein belongs to the nuclear hormone receptor family. NR3 subfamily. In terms of assembly, binds DNA as a homodimer. Can form a heterodimer with ER-beta.

Its subcellular location is the nucleus. The steroid hormones and their receptors are involved in the regulation of eukaryotic gene expression and affect cellular proliferation and differentiation in target tissues. The protein is Estrogen receptor (ESR1) of Taeniopygia guttata (Zebra finch).